The following is a 293-amino-acid chain: 5'-3' exoribonuclease Rnm (293 aa).

Mn(2+) contacts are provided by H17, H19, D24, H49, E76, H87, H202, D259, and H261.

The protein belongs to the PHP family. TrpH/YciV subfamily. The cofactor is Mn(2+).

It catalyses the reaction a ribonucleoside 3',5'-bisphosphate + H2O = a ribonucleoside 5'-phosphate + phosphate. Its function is as follows. Exoribonuclease that catalyzes the last steps of 5S, 16S and 23S rRNA 5'-end maturation. Removes 3 nucleotides (nt) from the 5' end of 5S, 16S and 23S rRNA precursors to generate the mature 5' ends. 5S and 23S rRNA maturation occurs more efficiently and accurately on ribosomal particles as compared to free RNA. Efficiently catalyzes the hydrolysis of the 3'-phosphate from 3',5'-bis-phosphonucleotides as well as the successive hydrolysis of 5'-phosphomononucleotides from the 5'-end of short pieces of RNA and DNA, with no specificity toward the identity of the nucleotide base. Is more efficient at hydrolyzing RNA oligonucleotides than DNA oligonucleotides. This enzyme can also hydrolyze annealed DNA duplexes, albeit at a catalytic efficiency lower than that of the corresponding single-stranded oligonucleotides. The polypeptide is 5'-3' exoribonuclease Rnm (Salmonella typhimurium (strain LT2 / SGSC1412 / ATCC 700720)).